Here is a 368-residue protein sequence, read N- to C-terminus: Glutamate 5-kinase (368 aa).

Lysine 10 serves as a coordination point for ATP. Substrate-binding residues include serine 50, aspartate 137, and asparagine 149. 169–170 (TD) is a binding site for ATP. The 79-residue stretch at 276–354 (RGTLVLDDGA…ESIVRELGYM (79 aa)) folds into the PUA domain.

Belongs to the glutamate 5-kinase family.

It is found in the cytoplasm. It catalyses the reaction L-glutamate + ATP = L-glutamyl 5-phosphate + ADP. Its pathway is amino-acid biosynthesis; L-proline biosynthesis; L-glutamate 5-semialdehyde from L-glutamate: step 1/2. Functionally, catalyzes the transfer of a phosphate group to glutamate to form L-glutamate 5-phosphate. This chain is Glutamate 5-kinase, found in Pseudomonas savastanoi pv. phaseolicola (strain 1448A / Race 6) (Pseudomonas syringae pv. phaseolicola (strain 1448A / Race 6)).